Here is a 371-residue protein sequence, read N- to C-terminus: N-acetyldiaminopimelate deacetylase (371 aa).

Asp68 is a catalytic residue. Glu127 functions as the Proton acceptor in the catalytic mechanism.

The protein belongs to the peptidase M20A family. N-acetyldiaminopimelate deacetylase subfamily.

It catalyses the reaction N-acetyl-(2S,6S)-2,6-diaminopimelate + H2O = (2S,6S)-2,6-diaminopimelate + acetate. It functions in the pathway amino-acid biosynthesis; L-lysine biosynthesis via DAP pathway; LL-2,6-diaminopimelate from (S)-tetrahydrodipicolinate (acetylase route): step 3/3. Its function is as follows. Catalyzes the conversion of N-acetyl-diaminopimelate to diaminopimelate and acetate. This is N-acetyldiaminopimelate deacetylase from Listeria monocytogenes serotype 4a (strain HCC23).